A 241-amino-acid chain; its full sequence is NH(3)-dependent NAD(+) synthetase (241 aa).

29-36 (GISGGIDS) provides a ligand contact to ATP. Residue aspartate 35 participates in Mg(2+) binding. Deamido-NAD(+) is bound at residue arginine 110. Glutamate 135 is a Mg(2+) binding site. Deamido-NAD(+) contacts are provided by lysine 143 and aspartate 150. Positions 159 and 181 each coordinate ATP. 226 to 227 (HK) is a deamido-NAD(+) binding site.

It belongs to the NAD synthetase family. As to quaternary structure, homodimer.

The catalysed reaction is deamido-NAD(+) + NH4(+) + ATP = AMP + diphosphate + NAD(+) + H(+). Its pathway is cofactor biosynthesis; NAD(+) biosynthesis; NAD(+) from deamido-NAD(+) (ammonia route): step 1/1. Catalyzes the ATP-dependent amidation of deamido-NAD to form NAD. Uses ammonia as a nitrogen source. This chain is NH(3)-dependent NAD(+) synthetase, found in Finegoldia magna (strain ATCC 29328 / DSM 20472 / WAL 2508) (Peptostreptococcus magnus).